The chain runs to 1236 residues: ESX-4 secretion system protein EccC4 (1236 aa).

2 consecutive transmembrane segments (helical) span residues 32 to 52 and 59 to 79; these read LLPVVMSVATVGVMVTVFLPG and PTFLAFPMMMLVSLVVTAVTG. FtsK domains are found at residues 407-607, 747-936, and 1018-1201; these read GTAV…SESR, RVPL…ADSE, and GQPV…DEGA. ATP is bound by residues 430–437, 765–772, and 1035–1042; these read GATGSGKS, GAPQTGKS, and GDNECGKT.

Part of the ESX-4 / type VII secretion system (T7SS), which is composed of cytosolic and membrane components.

It is found in the cell membrane. The sequence is that of ESX-4 secretion system protein EccC4 (eccC4) from Mycobacterium tuberculosis (strain ATCC 25618 / H37Rv).